Consider the following 172-residue polypeptide: Mitochondrial import inner membrane translocase subunit Tim17-B (172 aa).

Residues cysteine 9 and cysteine 78 are joined by a disulfide bond. Transmembrane regions (helical) follow at residues 17-37 (CGGA…IKGF), 61-77 (QIGG…STID), and 113-133 (VGSA…GILL). Positions 147-172 (FLEDPSQLTPKEGSPAPGYPNYQQYH) are disordered.

It belongs to the Tim17/Tim22/Tim23 family. As to quaternary structure, component of the TIM23 complex at least composed of TIMM23, TIMM17 (TIMM17A or TIMM17B) and TIMM50. The complex interacts with the TIMM44 component of the PAM complex. The complex also interacts with DNAJC15.

The protein resides in the mitochondrion inner membrane. Essential component of the TIM23 complex, a complex that mediates the translocation of transit peptide-containing proteins across the mitochondrial inner membrane. The sequence is that of Mitochondrial import inner membrane translocase subunit Tim17-B (Timm17b) from Mus musculus (Mouse).